The following is a 352-amino-acid chain: Chorismate synthase (352 aa).

Arg-48 provides a ligand contact to NADP(+). Residues 125-127 (RSS), 238-239 (NA), Gly-278, 293-297 (KPTSS), and Arg-319 each bind FMN.

Belongs to the chorismate synthase family. As to quaternary structure, homotetramer. The cofactor is FMNH2.

The enzyme catalyses 5-O-(1-carboxyvinyl)-3-phosphoshikimate = chorismate + phosphate. It participates in metabolic intermediate biosynthesis; chorismate biosynthesis; chorismate from D-erythrose 4-phosphate and phosphoenolpyruvate: step 7/7. Its function is as follows. Catalyzes the anti-1,4-elimination of the C-3 phosphate and the C-6 proR hydrogen from 5-enolpyruvylshikimate-3-phosphate (EPSP) to yield chorismate, which is the branch point compound that serves as the starting substrate for the three terminal pathways of aromatic amino acid biosynthesis. This reaction introduces a second double bond into the aromatic ring system. The chain is Chorismate synthase from Legionella pneumophila (strain Lens).